A 36-amino-acid polypeptide reads, in one-letter code: Potassium channel toxin alpha-KTx 16.1 (36 aa).

Disulfide bonds link Cys-7–Cys-28, Cys-13–Cys-33, and Cys-17–Cys-35.

Belongs to the short scorpion toxin superfamily. Potassium channel inhibitor family. Alpha-KTx 16 subfamily. In terms of tissue distribution, expressed by the venom gland.

The protein localises to the secreted. In terms of biological role, blocks calcium-activated potassium channels. The chain is Potassium channel toxin alpha-KTx 16.1 from Hottentotta tamulus (Eastern Indian scorpion).